A 355-amino-acid chain; its full sequence is UDP-N-acetylglucosamine--N-acetylmuramyl-(pentapeptide) pyrophosphoryl-undecaprenol N-acetylglucosamine transferase (355 aa).

UDP-N-acetyl-alpha-D-glucosamine-binding positions include 15-17, N127, R163, S191, I244, 263-268, and Q288; these read TGG and ALTVSE.

The protein belongs to the glycosyltransferase 28 family. MurG subfamily.

It is found in the cell inner membrane. The catalysed reaction is di-trans,octa-cis-undecaprenyl diphospho-N-acetyl-alpha-D-muramoyl-L-alanyl-D-glutamyl-meso-2,6-diaminopimeloyl-D-alanyl-D-alanine + UDP-N-acetyl-alpha-D-glucosamine = di-trans,octa-cis-undecaprenyl diphospho-[N-acetyl-alpha-D-glucosaminyl-(1-&gt;4)]-N-acetyl-alpha-D-muramoyl-L-alanyl-D-glutamyl-meso-2,6-diaminopimeloyl-D-alanyl-D-alanine + UDP + H(+). It functions in the pathway cell wall biogenesis; peptidoglycan biosynthesis. Its function is as follows. Cell wall formation. Catalyzes the transfer of a GlcNAc subunit on undecaprenyl-pyrophosphoryl-MurNAc-pentapeptide (lipid intermediate I) to form undecaprenyl-pyrophosphoryl-MurNAc-(pentapeptide)GlcNAc (lipid intermediate II). This Cronobacter sakazakii (strain ATCC BAA-894) (Enterobacter sakazakii) protein is UDP-N-acetylglucosamine--N-acetylmuramyl-(pentapeptide) pyrophosphoryl-undecaprenol N-acetylglucosamine transferase.